We begin with the raw amino-acid sequence, 181 residues long: 6,7-dimethyl-8-ribityllumazine synthase 2 (181 aa).

A disordered region spans residues 1-23; sequence MSLPMTETVTDPAETAPPTAERS. 5-amino-6-(D-ribitylamino)uracil contacts are provided by residues W40, 74 to 76, 98 to 100, and S129; these read SFE and LVV.

It belongs to the DMRL synthase family.

The enzyme catalyses (2S)-2-hydroxy-3-oxobutyl phosphate + 5-amino-6-(D-ribitylamino)uracil = 6,7-dimethyl-8-(1-D-ribityl)lumazine + phosphate + 2 H2O + H(+). It functions in the pathway cofactor biosynthesis; riboflavin biosynthesis; riboflavin from 2-hydroxy-3-oxobutyl phosphate and 5-amino-6-(D-ribitylamino)uracil: step 1/2. Its function is as follows. Catalyzes the formation of 6,7-dimethyl-8-ribityllumazine by condensation of 5-amino-6-(D-ribitylamino)uracil with 3,4-dihydroxy-2-butanone 4-phosphate. This is the penultimate step in the biosynthesis of riboflavin. The protein is 6,7-dimethyl-8-ribityllumazine synthase 2 of Rhodopseudomonas palustris (strain ATCC BAA-98 / CGA009).